Here is a 245-residue protein sequence, read N- to C-terminus: Exosome complex component RRP41 (245 aa).

At Ala2 the chain carries N-acetylalanine.

It belongs to the RNase PH family. As to quaternary structure, component of the RNA exosome core complex (Exo-9), composed of EXOSC1, EXOSC2, EXOSC3, EXOSC4, EXOSC5, EXOSC6, EXOSC7, EXOSC8 and EXOSC9; within the complex interacts with EXOSC2, EXOSC7 and EXOSC9. The catalytically inactive RNA exosome core complex (Exo-9) associates with the catalytic subunit EXOSC10/RRP6. Exo-9 may associate with DIS3 to form the nucleolar exosome complex, or DIS3L to form the cytoplasmic exosome complex. Exo-9 is formed by a hexameric base ring consisting of the heterodimers EXOSC4-EXOSC9, EXOSC5-EXOSC8 and EXOSC6-EXOSC7, and a cap ring consisting of EXOSC1, EXOSC2 and EXOSC3. The RNA exosome complex associates with cofactors C1D/RRP47, MPHOSPH6/MPP6 and MTREX/MTR4. Interacts with DDX60. Interacts with DIS3; the interaction is direct.

It localises to the cytoplasm. Its subcellular location is the nucleus. It is found in the nucleolus. The protein localises to the nucleoplasm. Functionally, non-catalytic component of the RNA exosome complex which has 3'-&gt;5' exoribonuclease activity and participates in a multitude of cellular RNA processing and degradation events. In the nucleus, the RNA exosome complex is involved in proper maturation of stable RNA species such as rRNA, snRNA and snoRNA, in the elimination of RNA processing by-products and non-coding 'pervasive' transcripts, such as antisense RNA species and promoter-upstream transcripts (PROMPTs), and of mRNAs with processing defects, thereby limiting or excluding their export to the cytoplasm. The RNA exosome may be involved in Ig class switch recombination (CSR) and/or Ig variable region somatic hypermutation (SHM) by targeting AICDA deamination activity to transcribed dsDNA substrates. In the cytoplasm, the RNA exosome complex is involved in general mRNA turnover and specifically degrades inherently unstable mRNAs containing AU-rich elements (AREs) within their 3' untranslated regions, and in RNA surveillance pathways, preventing translation of aberrant mRNAs. It seems to be involved in degradation of histone mRNA. The catalytic inactive RNA exosome core complex of 9 subunits (Exo-9) is proposed to play a pivotal role in the binding and presentation of RNA for ribonucleolysis, and to serve as a scaffold for the association with catalytic subunits and accessory proteins or complexes. EXOSC4 binds to ARE-containing RNAs. This chain is Exosome complex component RRP41 (Exosc4), found in Mus musculus (Mouse).